Consider the following 187-residue polypeptide: Phosphatidylethanolamine-binding protein 1 (187 aa).

A phosphoserine mark is found at serine 6 and serine 13. Threonine 42 bears the Phosphothreonine mark. Residues serine 52 and serine 98 each carry the phosphoserine modification. The interaction with RAF1 stretch occupies residues 93-134 (KGGNISSGTVLSDYVGSGPPKGTGLHRYVWLVYEQDGPLKCD).

The protein belongs to the phosphatidylethanolamine-binding protein family. In terms of assembly, has a tendency to form dimers by disulfide cross-linking. Interacts with RAF1 and this interaction is enhanced if RAF1 is phosphorylated on residues 'Ser-338', 'Ser-339', 'Tyr-340' and 'Tyr-341'. Interacts with ALOX15; in response to IL13/interleukin-13, prevents the interaction of PEBP1 with RAF1 to activate the ERK signaling cascade.

Its subcellular location is the cytoplasm. In terms of biological role, binds ATP, opioids and phosphatidylethanolamine. Has lower affinity for phosphatidylinositol and phosphatidylcholine. Serine protease inhibitor which inhibits thrombin, neuropsin and chymotrypsin but not trypsin, tissue type plasminogen activator and elastase. Inhibits the kinase activity of RAF1 by inhibiting its activation and by dissociating the RAF1/MEK complex and acting as a competitive inhibitor of MEK phosphorylation. Functionally, HCNP may be involved in the function of the presynaptic cholinergic neurons of the central nervous system. HCNP increases the production of choline acetyltransferase but not acetylcholinesterase. Seems to be mediated by a specific receptor. This chain is Phosphatidylethanolamine-binding protein 1 (PEBP1), found in Oryctolagus cuniculus (Rabbit).